The chain runs to 201 residues: Adenylyl-sulfate kinase (201 aa).

35-42 (GLSGSGKS) is a binding site for ATP. Ser-109 serves as the catalytic Phosphoserine intermediate.

This sequence belongs to the APS kinase family.

It catalyses the reaction adenosine 5'-phosphosulfate + ATP = 3'-phosphoadenylyl sulfate + ADP + H(+). It participates in sulfur metabolism; hydrogen sulfide biosynthesis; sulfite from sulfate: step 2/3. In terms of biological role, catalyzes the synthesis of activated sulfate. The polypeptide is Adenylyl-sulfate kinase (Escherichia coli O139:H28 (strain E24377A / ETEC)).